Here is a 207-residue protein sequence, read N- to C-terminus: Protein LURP1 (207 aa).

This sequence belongs to the LOR family. In terms of tissue distribution, limited to discrete pathogen infection sites in leaves.

In terms of biological role, involved in basal defense against virulent oomycetes. Might be related to the phospholipid scramblase and tubby-like superfamily of membrane tethered transcription factors. The sequence is that of Protein LURP1 (LURP1) from Arabidopsis thaliana (Mouse-ear cress).